The sequence spans 573 residues: Solute carrier family 41 member 2 (573 aa).

Over 1-162 (MTNSKGRSIT…KESSGIMALQ (162 aa)) the chain is Extracellular. Residues Ser-136 and Ser-137 each carry the phosphoserine modification. The chain crosses the membrane as a helical span at residues 163–183 (ILVPFLLAGFGTVSAGMVLDI). Over 184–195 (VQHWEVFRKVTE) the chain is Cytoplasmic. A helical membrane pass occupies residues 196-216 (VFILVPALLGLKGNLEMTLAS). Residues 217–245 (RLSTAVNIGKMDSPIEKWNLIIGNLALKQ) lie on the Extracellular side of the membrane. A helical transmembrane segment spans residues 246–266 (VQATVVGFLAAVAAIILGWIP). Residues 267–282 (EGKYYLDHSILLCSSS) are Cytoplasmic-facing. Residues 283–303 (VATAFIASLLQGIIMVGVIVG) form a helical membrane-spanning segment. The Extracellular segment spans residues 304–313 (SKKTGINPDN). The chain crosses the membrane as a helical span at residues 314–334 (VATPIAASFGDLITLAILAWI). Residues 335–347 (SQGLYSCLETYYY) are Cytoplasmic-facing. Residues 348-368 (ISPLVGVFFLALTPIWIIIAA) traverse the membrane as a helical segment. Residues 369 to 376 (KHPATRTV) are Extracellular-facing. A helical membrane pass occupies residues 377 to 397 (LHSGWEPVITAMVISSIGGLI). The Cytoplasmic segment spans residues 398–406 (LDTTVSDPN). A helical membrane pass occupies residues 407–427 (LVGIVVYTPVINGIGGNLVAI). Over 428–469 (QASRISTYLHLHSIPGELPDEPKGCYYPFRTFFGPGVNNKSA) the chain is Extracellular. The chain crosses the membrane as a helical span at residues 470 to 490 (QVLLLLVIPGHLIFLYTIHLM). At 491-498 (KSGHTSLT) the chain is on the cytoplasmic side. A helical membrane pass occupies residues 499-519 (IIFIVVYLFGAVLQVFTLLWI). Residues 520-543 (ADWMVHHFWRKGKDPDSFSIPYLT) lie on the Extracellular side of the membrane. Residues 544-564 (ALGDLLGTALLALSFHFLWLI) traverse the membrane as a helical segment. Residues 565-573 (GDRDGDVGD) lie on the Cytoplasmic side of the membrane.

It belongs to the SLC41A transporter family.

The protein resides in the cell membrane. The catalysed reaction is Mg(2+)(in) = Mg(2+)(out). It carries out the reaction Mn(2+)(in) = Mn(2+)(out). It catalyses the reaction Co(2+)(in) = Co(2+)(out). The enzyme catalyses Ni(2+)(in) = Ni(2+)(out). The catalysed reaction is Fe(2+)(in) = Fe(2+)(out). Acts as a plasma-membrane magnesium transporter. Can also mediate the transport of other divalent metal cations in an order of Ba(2+) &gt; Ni(2+) &gt; Co(2+) &gt; Fe(2+) &gt; Mn(2+). The chain is Solute carrier family 41 member 2 (SLC41A2) from Homo sapiens (Human).